The sequence spans 456 residues: MKIEEVKSTTKTQRIASHSHVKGLGLDEAGNAKQSASGLVGQESAREACGIITELIRSKKMAGRAILLAGPPGTGKTALALAMAQELGNKVPFCPMVGSEVYSSEIKKTEVLMENFRRAIGLRIKETKEVYEGEVTELTPCETENPMGGYGKTISHVIIGLKTAKGTKQLKLDPSIYESLQKERVEVGDVIYIEANSGAVKRQGRCDTFATEFDLEAEEYVPLPKGDVHEKKEIIQDVTLHDLDVANARPQGGQDILSMMGQLMKPKKTEITDKLRGEINKVVNKYIDQGVAELVPGVLFIDEVHMLDIECFTYLHRALESSIAPIVVFASNRGNCLIRGTEDISSPHGIPLDLLDRVMIIRTMLYTPQEMKQIIKIRAQTEGLNISEEALSHLGEIGTKTTLRYAVQLLTPASLLARVQGREVVEKEHVEEINELFYDAKSSAKILQDQHTKFMK.

The interval 1-20 (MKIEEVKSTTKTQRIASHSH) is disordered. 70–77 (GPPGTGKT) lines the ATP pocket.

Belongs to the RuvB family. Forms homohexameric rings. Can form a dodecamer with ruvbl2 made of two stacked hexameric rings. Is a component of the RNA polymerase II holoenzyme complex. Component of the chromatin-remodeling Ino80 complex. Component of some MLL1/MLL complex.

Its subcellular location is the nucleus. The protein resides in the dynein axonemal particle. It catalyses the reaction ATP + H2O = ADP + phosphate + H(+). Its function is as follows. Has single-stranded DNA-stimulated ATPase and ATP-dependent DNA helicase (3' to 5') activity suggesting a role in nuclear processes such as recombination and transcription. Proposed core component of the chromatin remodeling Ino80 complex which exhibits DNA- and nucleosome-activated ATPase activity and catalyzes ATP-dependent nucleosome sliding. May act as a negative regulator of embryonic heart growth. This chain is RuvB-like 1 (ruvbl1), found in Danio rerio (Zebrafish).